We begin with the raw amino-acid sequence, 368 residues long: 3-dehydroquinate synthase (368 aa).

NAD(+) contacts are provided by residues 71–76 (DGEAAK), 105–109 (GATTD), 129–130 (TT), Lys-142, and Lys-151. 3 residues coordinate Zn(2+): Glu-184, His-247, and His-263.

The protein belongs to the sugar phosphate cyclases superfamily. Dehydroquinate synthase family. It depends on Co(2+) as a cofactor. The cofactor is Zn(2+). NAD(+) serves as cofactor.

It localises to the cytoplasm. It catalyses the reaction 7-phospho-2-dehydro-3-deoxy-D-arabino-heptonate = 3-dehydroquinate + phosphate. The protein operates within metabolic intermediate biosynthesis; chorismate biosynthesis; chorismate from D-erythrose 4-phosphate and phosphoenolpyruvate: step 2/7. Functionally, catalyzes the conversion of 3-deoxy-D-arabino-heptulosonate 7-phosphate (DAHP) to dehydroquinate (DHQ). This is 3-dehydroquinate synthase from Thermobifida fusca (strain YX).